The sequence spans 209 residues: Methylthioribulose-1-phosphate dehydratase (209 aa).

H99 and H101 together coordinate Zn(2+).

The protein belongs to the aldolase class II family. MtnB subfamily. Zn(2+) is required as a cofactor.

The catalysed reaction is 5-(methylsulfanyl)-D-ribulose 1-phosphate = 5-methylsulfanyl-2,3-dioxopentyl phosphate + H2O. The protein operates within amino-acid biosynthesis; L-methionine biosynthesis via salvage pathway; L-methionine from S-methyl-5-thio-alpha-D-ribose 1-phosphate: step 2/6. In terms of biological role, catalyzes the dehydration of methylthioribulose-1-phosphate (MTRu-1-P) into 2,3-diketo-5-methylthiopentyl-1-phosphate (DK-MTP-1-P). The polypeptide is Methylthioribulose-1-phosphate dehydratase (Leptospira biflexa serovar Patoc (strain Patoc 1 / Ames)).